Consider the following 330-residue polypeptide: tRNA (guanine-N(7)-)-methyltransferase (330 aa).

Positions 1-27 (MSTPPAKRQKRDQYRKRAAAAANEDTG) are disordered. A compositionally biased stretch (basic residues) spans 7–18 (KRQKRDQYRKRA). S-adenosyl-L-methionine contacts are provided by residues Gly95 and 118-119 (EI). The disordered stretch occupies residues 138–185 (QNQLKNSSTTASESPAPAIPAEPATDGASPDAASTPETSNSPVPGGYQ). Positions 144–162 (SSTTASESPAPAIPAEPAT) are enriched in low complexity. Polar residues predominate over residues 172–185 (TPETSNSPVPGGYQ). S-adenosyl-L-methionine is bound by residues 193 to 194 (NT) and Cys213. Asp216 is an active-site residue. 302 to 304 (TEE) provides a ligand contact to S-adenosyl-L-methionine.

Belongs to the class I-like SAM-binding methyltransferase superfamily. TrmB family. Forms a complex with trm82.

Its subcellular location is the nucleus. It carries out the reaction guanosine(46) in tRNA + S-adenosyl-L-methionine = N(7)-methylguanosine(46) in tRNA + S-adenosyl-L-homocysteine. It participates in tRNA modification; N(7)-methylguanine-tRNA biosynthesis. Functionally, catalyzes the formation of N(7)-methylguanine at position 46 (m7G46) in tRNA. The protein is tRNA (guanine-N(7)-)-methyltransferase (trm8) of Aspergillus oryzae (strain ATCC 42149 / RIB 40) (Yellow koji mold).